A 96-amino-acid polypeptide reads, in one-letter code: Large ribosomal subunit protein eL21 (96 aa).

Belongs to the eukaryotic ribosomal protein eL21 family.

This Methanosphaerula palustris (strain ATCC BAA-1556 / DSM 19958 / E1-9c) protein is Large ribosomal subunit protein eL21.